Here is a 207-residue protein sequence, read N- to C-terminus: Outer-membrane lipoprotein LolB (207 aa).

The N-terminal stretch at 1-21 (MPMRKRHFYRLLPLASLLLAA) is a signal peptide. Cys22 carries the N-palmitoyl cysteine lipid modification. Cys22 is lipidated: S-diacylglycerol cysteine.

This sequence belongs to the LolB family. Monomer.

The protein localises to the cell outer membrane. In terms of biological role, plays a critical role in the incorporation of lipoproteins in the outer membrane after they are released by the LolA protein. This is Outer-membrane lipoprotein LolB from Yersinia pseudotuberculosis serotype O:1b (strain IP 31758).